A 354-amino-acid chain; its full sequence is Methylthioribose-1-phosphate isomerase (354 aa).

Residues 58–60 (RGA), arginine 101, and glutamine 204 each bind substrate. The active-site Proton donor is aspartate 245. A substrate-binding site is contributed by 255–256 (NK).

The protein belongs to the eIF-2B alpha/beta/delta subunits family. MtnA subfamily.

The enzyme catalyses 5-(methylsulfanyl)-alpha-D-ribose 1-phosphate = 5-(methylsulfanyl)-D-ribulose 1-phosphate. It participates in amino-acid biosynthesis; L-methionine biosynthesis via salvage pathway; L-methionine from S-methyl-5-thio-alpha-D-ribose 1-phosphate: step 1/6. Its function is as follows. Catalyzes the interconversion of methylthioribose-1-phosphate (MTR-1-P) into methylthioribulose-1-phosphate (MTRu-1-P). This chain is Methylthioribose-1-phosphate isomerase, found in Xanthomonas axonopodis pv. citri (strain 306).